A 75-amino-acid polypeptide reads, in one-letter code: Small ribosomal subunit protein bS18 (75 aa).

Belongs to the bacterial ribosomal protein bS18 family. As to quaternary structure, part of the 30S ribosomal subunit. Forms a tight heterodimer with protein bS6.

Binds as a heterodimer with protein bS6 to the central domain of the 16S rRNA, where it helps stabilize the platform of the 30S subunit. The sequence is that of Small ribosomal subunit protein bS18 from Methylobacillus flagellatus (strain ATCC 51484 / DSM 6875 / VKM B-1610 / KT).